The primary structure comprises 114 residues: Putative movement protein (114 aa).

The chain crosses the membrane as a helical span at residues 27–47 (LIGIILLVTVCLTVLWVCIML). The interval 79–114 (RTPFEATGPERERNWEARRQSTTVNPASQPNTGSVF) is disordered. Over residues 86–97 (GPERERNWEARR) the composition is skewed to basic and acidic residues. Over residues 98–114 (QSTTVNPASQPNTGSVF) the composition is skewed to polar residues.

This sequence belongs to the nanovirus movement protein family.

It is found in the host cell membrane. In terms of biological role, may transport viral genome to neighboring plant cells directly through plasmosdesmata, without any budding. The movement protein allows efficient cell to cell propagation, by bypassing the host cell wall barrier. The polypeptide is Putative movement protein (DNA-M) (Faba bean necrotic yellows virus (isolate Egyptian EV1-93) (FBNYV)).